A 149-amino-acid polypeptide reads, in one-letter code: Deoxyuridine 5'-triphosphate nucleotidohydrolase (149 aa).

Residues 68-70 (RSG), N81, 85-87 (LID), and M95 each bind substrate.

It belongs to the dUTPase family. Mg(2+) is required as a cofactor.

It catalyses the reaction dUTP + H2O = dUMP + diphosphate + H(+). The protein operates within pyrimidine metabolism; dUMP biosynthesis; dUMP from dCTP (dUTP route): step 2/2. Functionally, this enzyme is involved in nucleotide metabolism: it produces dUMP, the immediate precursor of thymidine nucleotides and it decreases the intracellular concentration of dUTP so that uracil cannot be incorporated into DNA. This is Deoxyuridine 5'-triphosphate nucleotidohydrolase from Albidiferax ferrireducens (strain ATCC BAA-621 / DSM 15236 / T118) (Rhodoferax ferrireducens).